We begin with the raw amino-acid sequence, 172 residues long: Large ribosomal subunit protein uL10 (172 aa).

This sequence belongs to the universal ribosomal protein uL10 family. In terms of assembly, part of the ribosomal stalk of the 50S ribosomal subunit. The N-terminus interacts with L11 and the large rRNA to form the base of the stalk. The C-terminus forms an elongated spine to which L12 dimers bind in a sequential fashion forming a multimeric L10(L12)X complex.

Its function is as follows. Forms part of the ribosomal stalk, playing a central role in the interaction of the ribosome with GTP-bound translation factors. In Ruegeria pomeroyi (strain ATCC 700808 / DSM 15171 / DSS-3) (Silicibacter pomeroyi), this protein is Large ribosomal subunit protein uL10.